A 179-amino-acid polypeptide reads, in one-letter code: Ribosome-recycling factor (179 aa).

This sequence belongs to the RRF family.

The protein resides in the cytoplasm. In terms of biological role, responsible for the release of ribosomes from messenger RNA at the termination of protein biosynthesis. May increase the efficiency of translation by recycling ribosomes from one round of translation to another. In Chlamydia trachomatis serovar L2b (strain UCH-1/proctitis), this protein is Ribosome-recycling factor.